The primary structure comprises 391 residues: S-adenosylmethionine synthase (391 aa).

Residues 1 to 20 (MPRSDYLFTSESVSEGHPDK) are disordered. His17 lines the ATP pocket. Mg(2+) is bound at residue Asp19. Glu45 contributes to the K(+) binding site. Residues Glu58 and Gln102 each coordinate L-methionine. Residues 102–112 (QSADIAQGVDA) form a flexible loop region. ATP contacts are provided by residues 169–171 (DAK), 235–236 (KF), Asp244, 250–251 (RK), Ala267, and Lys271. Asp244 is a binding site for L-methionine. Lys275 lines the L-methionine pocket.

The protein belongs to the AdoMet synthase family. In terms of assembly, homotetramer; dimer of dimers. Mg(2+) is required as a cofactor. Requires K(+) as cofactor.

The protein localises to the cytoplasm. It catalyses the reaction L-methionine + ATP + H2O = S-adenosyl-L-methionine + phosphate + diphosphate. It functions in the pathway amino-acid biosynthesis; S-adenosyl-L-methionine biosynthesis; S-adenosyl-L-methionine from L-methionine: step 1/1. Catalyzes the formation of S-adenosylmethionine (AdoMet) from methionine and ATP. The overall synthetic reaction is composed of two sequential steps, AdoMet formation and the subsequent tripolyphosphate hydrolysis which occurs prior to release of AdoMet from the enzyme. The sequence is that of S-adenosylmethionine synthase from Methylorubrum extorquens (strain CM4 / NCIMB 13688) (Methylobacterium extorquens).